The sequence spans 169 residues: Crossover junction endodeoxyribonuclease RuvC (169 aa).

Active-site residues include Asp-12, Glu-72, and Asp-144. Mg(2+)-binding residues include Asp-12, Glu-72, and Asp-144.

The protein belongs to the RuvC family. As to quaternary structure, homodimer which binds Holliday junction (HJ) DNA. The HJ becomes 2-fold symmetrical on binding to RuvC with unstacked arms; it has a different conformation from HJ DNA in complex with RuvA. In the full resolvosome a probable DNA-RuvA(4)-RuvB(12)-RuvC(2) complex forms which resolves the HJ. Mg(2+) is required as a cofactor.

It is found in the cytoplasm. The catalysed reaction is Endonucleolytic cleavage at a junction such as a reciprocal single-stranded crossover between two homologous DNA duplexes (Holliday junction).. The RuvA-RuvB-RuvC complex processes Holliday junction (HJ) DNA during genetic recombination and DNA repair. Endonuclease that resolves HJ intermediates. Cleaves cruciform DNA by making single-stranded nicks across the HJ at symmetrical positions within the homologous arms, yielding a 5'-phosphate and a 3'-hydroxyl group; requires a central core of homology in the junction. The consensus cleavage sequence is 5'-(A/T)TT(C/G)-3'. Cleavage occurs on the 3'-side of the TT dinucleotide at the point of strand exchange. HJ branch migration catalyzed by RuvA-RuvB allows RuvC to scan DNA until it finds its consensus sequence, where it cleaves and resolves the cruciform DNA. This is Crossover junction endodeoxyribonuclease RuvC from Azorhizobium caulinodans (strain ATCC 43989 / DSM 5975 / JCM 20966 / LMG 6465 / NBRC 14845 / NCIMB 13405 / ORS 571).